We begin with the raw amino-acid sequence, 209 residues long: Large ribosomal subunit protein bL25 (209 aa).

The segment at 188–209 is disordered; that stretch reads STSMEKEGEGSQEPTAAPSSEN. The segment covering 199-209 has biased composition (polar residues); the sequence is QEPTAAPSSEN.

The protein belongs to the bacterial ribosomal protein bL25 family. CTC subfamily. In terms of assembly, part of the 50S ribosomal subunit; part of the 5S rRNA/L5/L18/L25 subcomplex. Contacts the 5S rRNA. Binds to the 5S rRNA independently of L5 and L18.

In terms of biological role, this is one of the proteins that binds to the 5S RNA in the ribosome where it forms part of the central protuberance. In Ehrlichia canis (strain Jake), this protein is Large ribosomal subunit protein bL25.